Reading from the N-terminus, the 120-residue chain is Glycine cleavage system H protein (120 aa).

Residues 17 to 99 (VATVGITAHA…QGAGWLYRLK (83 aa)) enclose the Lipoyl-binding domain. K58 carries the N6-lipoyllysine modification.

The protein belongs to the GcvH family. The glycine cleavage system is composed of four proteins: P, T, L and H. The cofactor is (R)-lipoate.

Functionally, the glycine cleavage system catalyzes the degradation of glycine. The H protein shuttles the methylamine group of glycine from the P protein to the T protein. This is Glycine cleavage system H protein from Methylorubrum populi (strain ATCC BAA-705 / NCIMB 13946 / BJ001) (Methylobacterium populi).